The primary structure comprises 816 residues: Bifunctional aspartokinase/homoserine dehydrogenase (816 aa).

Residues 1–250 (MKLLKFGGTS…VPNARLLKSI (250 aa)) form an aspartokinase region. Positions 251–471 (SYQEAMELSY…FNKKTIHMFL (221 aa)) are interface. The 78-residue stretch at 402-479 (IVGSNIYKKH…FLIGIGGIGS (78 aa)) folds into the ACT domain. The segment at 472–816 (IGIGGIGSTL…VFSDLLRTLS (345 aa)) is homoserine dehydrogenase. NAD(+) contacts are provided by Gly476, Ile477, and Ala505. Residue Ile477 coordinates NADP(+). Ile477 is a binding site for NADPH. Positions 508 and 556 each coordinate NADP(+). Residue Thr556 coordinates NAD(+). Residues Thr556, Ser557, Ser578, and Lys580 each contribute to the NADPH site. NADP(+) contacts are provided by Ser578 and Lys580. The Na(+) site is built by Glu607, Val610, Ala612, and Leu614. NADP(+)-binding residues include Gly665 and Glu668. L-homoserine is bound by residues Glu668 and Asp679. The active-site Proton donor is the Lys683. Gly799 provides a ligand contact to NAD(+). Gly799 lines the NADP(+) pocket. Gly799 lines the NADPH pocket.

It in the N-terminal section; belongs to the aspartokinase family. The protein in the C-terminal section; belongs to the homoserine dehydrogenase family. Homotetramer. A metal cation is required as a cofactor.

The enzyme catalyses L-homoserine + NADP(+) = L-aspartate 4-semialdehyde + NADPH + H(+). It carries out the reaction L-homoserine + NAD(+) = L-aspartate 4-semialdehyde + NADH + H(+). It catalyses the reaction L-aspartate + ATP = 4-phospho-L-aspartate + ADP. It functions in the pathway amino-acid biosynthesis; L-lysine biosynthesis via DAP pathway; (S)-tetrahydrodipicolinate from L-aspartate: step 1/4. The protein operates within amino-acid biosynthesis; L-methionine biosynthesis via de novo pathway; L-homoserine from L-aspartate: step 1/3. Its pathway is amino-acid biosynthesis; L-methionine biosynthesis via de novo pathway; L-homoserine from L-aspartate: step 3/3. It participates in amino-acid biosynthesis; L-threonine biosynthesis; L-threonine from L-aspartate: step 1/5. It functions in the pathway amino-acid biosynthesis; L-threonine biosynthesis; L-threonine from L-aspartate: step 3/5. Bifunctional aspartate kinase and homoserine dehydrogenase that catalyzes the first and the third steps toward the synthesis of lysine, methionine and threonine from aspartate. The protein is Bifunctional aspartokinase/homoserine dehydrogenase (thrA) of Buchnera aphidicola subsp. Acyrthosiphon pisum (strain APS) (Acyrthosiphon pisum symbiotic bacterium).